A 344-amino-acid chain; its full sequence is Phenylalanine--tRNA ligase alpha subunit (344 aa).

Residue Glu256 participates in Mg(2+) binding.

This sequence belongs to the class-II aminoacyl-tRNA synthetase family. Phe-tRNA synthetase alpha subunit type 1 subfamily. As to quaternary structure, tetramer of two alpha and two beta subunits. Requires Mg(2+) as cofactor.

Its subcellular location is the cytoplasm. It carries out the reaction tRNA(Phe) + L-phenylalanine + ATP = L-phenylalanyl-tRNA(Phe) + AMP + diphosphate + H(+). This is Phenylalanine--tRNA ligase alpha subunit from Bacillus pumilus (strain SAFR-032).